A 393-amino-acid polypeptide reads, in one-letter code: MTNSNRIKLTWISFLSYALTGALVIVTGMVMGNIADYFHLPVSSMSNTFTFLNAGILISIFLNAWLMEIVPLKTQLRFGFILMVLAVAGLMFSHSLALFSAAMFVLGLVSGITMSIGTFLITQLYEGRQRGSRLLFTDSFFSMAGMIFPMVAAFLLARSIEWYWVYACIGLVYLAIFILTFGCEFPALGKHAQHSQAPVVKEKWGIGVLFLAVAALCYILGQLGFISWVPEYAKGLGMSLNDAGALVSDFWMSYMFGMWAFSFILRFFDLQRILTVLAGMAAVLMYLFITGTQAHMPWFILTLGFFSSAIYTSIITLGSQQTKVASPKLVNFILTCGTIGTMLTFVVTGPIVAHSGPQAALLTANGLYAVVFVMCFALGFVSRHRQHSSPAAH.

The Cytoplasmic portion of the chain corresponds to 1–10 (MTNSNRIKLT). A helical transmembrane segment spans residues 11–31 (WISFLSYALTGALVIVTGMVM). Over 32-50 (GNIADYFHLPVSSMSNTFT) the chain is Periplasmic. A helical membrane pass occupies residues 51–71 (FLNAGILISIFLNAWLMEIVP). Residues 72-77 (LKTQLR) lie on the Cytoplasmic side of the membrane. The helical transmembrane segment at 78 to 98 (FGFILMVLAVAGLMFSHSLAL) threads the bilayer. Residues 99-100 (FS) lie on the Periplasmic side of the membrane. A helical membrane pass occupies residues 101–121 (AAMFVLGLVSGITMSIGTFLI). At 122–133 (TQLYEGRQRGSR) the chain is on the cytoplasmic side. Residues 134–154 (LLFTDSFFSMAGMIFPMVAAF) traverse the membrane as a helical segment. Residues 155–161 (LLARSIE) lie on the Periplasmic side of the membrane. The helical transmembrane segment at 162-182 (WYWVYACIGLVYLAIFILTFG) threads the bilayer. Residues 183–205 (CEFPALGKHAQHSQAPVVKEKWG) are Cytoplasmic-facing. The helical transmembrane segment at 206-226 (IGVLFLAVAALCYILGQLGFI) threads the bilayer. At 227–244 (SWVPEYAKGLGMSLNDAG) the chain is on the periplasmic side. A helical transmembrane segment spans residues 245-265 (ALVSDFWMSYMFGMWAFSFIL). Topologically, residues 266–272 (RFFDLQR) are cytoplasmic. A helical membrane pass occupies residues 273–293 (ILTVLAGMAAVLMYLFITGTQ). The Periplasmic segment spans residues 294-297 (AHMP). The helical transmembrane segment at 298-318 (WFILTLGFFSSAIYTSIITLG) threads the bilayer. Residues 319–331 (SQQTKVASPKLVN) are Cytoplasmic-facing. Residues 332–352 (FILTCGTIGTMLTFVVTGPIV) form a helical membrane-spanning segment. The Periplasmic portion of the chain corresponds to 353-360 (AHSGPQAA). A helical membrane pass occupies residues 361 to 381 (LLTANGLYAVVFVMCFALGFV). Topologically, residues 382–393 (SRHRQHSSPAAH) are cytoplasmic.

This sequence belongs to the major facilitator superfamily. TsgA family.

It localises to the cell inner membrane. The sequence is that of Protein TsgA from Salmonella paratyphi A (strain ATCC 9150 / SARB42).